The sequence spans 130 residues: DNA-directed RNA polymerase subunit omega (130 aa).

A disordered region spans residues 80–130 (PEPDTVPLIGSAGASVDADDTEVAPERMTEEELLKGLEGLAPPEEQPEEDE). Basic and acidic residues predominate over residues 103–114 (APERMTEEELLK).

The protein belongs to the RNA polymerase subunit omega family. As to quaternary structure, the RNAP catalytic core consists of 2 alpha, 1 beta, 1 beta' and 1 omega subunit. When a sigma factor is associated with the core the holoenzyme is formed, which can initiate transcription.

It carries out the reaction RNA(n) + a ribonucleoside 5'-triphosphate = RNA(n+1) + diphosphate. Its function is as follows. Promotes RNA polymerase assembly. Latches the N- and C-terminal regions of the beta' subunit thereby facilitating its interaction with the beta and alpha subunits. This Rhodopseudomonas palustris (strain BisB18) protein is DNA-directed RNA polymerase subunit omega.